The chain runs to 146 residues: Universal stress protein MT1672 (146 aa).

This sequence belongs to the universal stress protein A family.

The sequence is that of Universal stress protein MT1672 from Mycobacterium tuberculosis (strain CDC 1551 / Oshkosh).